We begin with the raw amino-acid sequence, 192 residues long: MSTIKSGDIDKGSFLLFKGMPHIVLEREFSKMGRGGSIVRLKLKNLKNKSVIKETLKGSDTVEEIEVLEVNSQYLYKDNESLIFMDLETYDQFSVNLRDVVNLEDKVLFLQEAEVYSLIKWGNEVIDLKLPPKVAFEVVDAEIAVKGDTVTNAMKNVTLHTDLVVKAPLFINIGDKILVNSETKEYAERVKV.

This sequence belongs to the elongation factor P family.

The protein resides in the cytoplasm. Its pathway is protein biosynthesis; polypeptide chain elongation. Involved in peptide bond synthesis. Stimulates efficient translation and peptide-bond synthesis on native or reconstituted 70S ribosomes in vitro. Probably functions indirectly by altering the affinity of the ribosome for aminoacyl-tRNA, thus increasing their reactivity as acceptors for peptidyl transferase. The chain is Elongation factor P from Borrelia recurrentis (strain A1).